The primary structure comprises 450 residues: Thiamine biosynthesis regulatory protein (450 aa).

Positions 1-12 are enriched in basic residues; the sequence is MVNSKRQQRSKK. The disordered stretch occupies residues 1 to 23; that stretch reads MVNSKRQQRSKKVASSSKVPPTK. Over residues 13–23 the composition is skewed to low complexity; sequence VASSSKVPPTK. Positions 30–57 form a DNA-binding region, zn(2)-C6 fungal-type; it reads CWACRFKKRRCDENRPICSLCAKHGDNC. The tract at residues 210 to 234 is disordered; the sequence is TDQLPSPGHSMSSAEETTTAALSSP.

Its subcellular location is the nucleus. In terms of biological role, positive regulator of thiamine biosynthesis. In Saccharomyces cerevisiae (strain ATCC 204508 / S288c) (Baker's yeast), this protein is Thiamine biosynthesis regulatory protein (THI2).